The following is a 130-amino-acid chain: Large ribosomal subunit protein eL32 (130 aa).

It belongs to the eukaryotic ribosomal protein eL32 family.

In Pyrococcus horikoshii (strain ATCC 700860 / DSM 12428 / JCM 9974 / NBRC 100139 / OT-3), this protein is Large ribosomal subunit protein eL32 (rpl32e).